A 108-amino-acid chain; its full sequence is Universal stress protein Slr1101 (108 aa).

Belongs to the universal stress protein A family.

The chain is Universal stress protein Slr1101 from Synechocystis sp. (strain ATCC 27184 / PCC 6803 / Kazusa).